Here is a 110-residue protein sequence, read N- to C-terminus: uncharacterized protein (110 aa).

This is an uncharacterized protein from Mycobacterium tuberculosis (strain CDC 1551 / Oshkosh).